Here is a 227-residue protein sequence, read N- to C-terminus: Thymidine kinase 1 (227 aa).

ATP is bound by residues 15-22 (GPMFSGKT), 47-49 (DTR), and 91-94 (DEGQ). Catalysis depends on Glu92, which acts as the Proton acceptor. Phe122 serves as a coordination point for substrate. Residues Cys147 and Cys150 each contribute to the Zn(2+) site. Substrate is bound by residues 166 to 170 (IELIG) and Tyr175. Residues Cys179 and Cys182 each coordinate Zn(2+). Residues 187-196 (QNEGNSTKPS) are compositionally biased toward polar residues. A disordered region spans residues 187–227 (QNEGNSTKPSKTARHSHSQSAPSVAPLAVNINPDDHLNNDY).

The protein belongs to the thymidine kinase family. As to quaternary structure, interacts with calmodulin in the presence of Ca(2+).

The enzyme catalyses thymidine + ATP = dTMP + ADP + H(+). The chain is Thymidine kinase 1 from Dictyostelium discoideum (Social amoeba).